Reading from the N-terminus, the 686-residue chain is Catalase-2 (686 aa).

Basic and acidic residues predominate over residues 1–27 (MSDDQNKRVNEHSKDEQLEQYRTDNSG). Residues 1–43 (MSDDQNKRVNEHSKDEQLEQYRTDNSGKKMTTNQGLRVSEDEH) are disordered. Residues His-78 and Asn-151 contribute to the active site. Heme is bound at residue Tyr-365.

The protein belongs to the catalase family. HPII subfamily. Heme serves as cofactor.

It carries out the reaction 2 H2O2 = O2 + 2 H2O. Decomposes hydrogen peroxide into water and oxygen; serves to protect cells from the toxic effects of hydrogen peroxide. Involved in sporulation. The protein is Catalase-2 (katE) of Bacillus subtilis (strain 168).